The sequence spans 330 residues: Global transcription regulator sge1 (330 aa).

2 disordered regions span residues 93 to 123 (PPGE…RNSV) and 239 to 306 (QYAP…HQPQ). Over residues 105–114 (GKSTTQSGGI) the composition is skewed to polar residues. Low complexity predominate over residues 250–306 (QQPALQQQPQQQPQPQHQPQLQYQPQPHQHQPQLQYQPQQQHQPQQQYRPQPQHQPQ).

It belongs to the MIT1/WOR1 family.

It is found in the nucleus. In terms of biological role, global transcriptional regulator of pathogenicity. Acts as an activator of parasitic growth. Not essential for colonization or penetration of the root surface, but required for expression of genes encoding effectors that are secreted during infection. Involved in conidiogenesis, but is not required for conidial fitness, overall (colony) morphology, vegetative growth or carbon source utilization. The polypeptide is Global transcription regulator sge1 (Fusarium oxysporum f. sp. lycopersici (strain 4287 / CBS 123668 / FGSC 9935 / NRRL 34936) (Fusarium vascular wilt of tomato)).